We begin with the raw amino-acid sequence, 159 residues long: Ribosome maturation factor RimP (159 aa).

It belongs to the RimP family.

It is found in the cytoplasm. Its function is as follows. Required for maturation of 30S ribosomal subunits. This is Ribosome maturation factor RimP from Bordetella avium (strain 197N).